Reading from the N-terminus, the 599-residue chain is Aspartate--tRNA ligase (599 aa).

E180 contacts L-aspartate. The interval 204–207 is aspartate; sequence QIFK. R226 provides a ligand contact to L-aspartate. ATP contacts are provided by residues 226-228 and Q235; that span reads RDE. H454 is an L-aspartate binding site. ATP is bound at residue E488. R495 is a binding site for L-aspartate. 540 to 543 contributes to the ATP binding site; the sequence is GLDR.

This sequence belongs to the class-II aminoacyl-tRNA synthetase family. Type 1 subfamily. In terms of assembly, homodimer.

The protein resides in the cytoplasm. It catalyses the reaction tRNA(Asp) + L-aspartate + ATP = L-aspartyl-tRNA(Asp) + AMP + diphosphate. Its function is as follows. Catalyzes the attachment of L-aspartate to tRNA(Asp) in a two-step reaction: L-aspartate is first activated by ATP to form Asp-AMP and then transferred to the acceptor end of tRNA(Asp). The protein is Aspartate--tRNA ligase of Clostridium beijerinckii (strain ATCC 51743 / NCIMB 8052) (Clostridium acetobutylicum).